Here is a 233-residue protein sequence, read N- to C-terminus: Uridylate kinase (233 aa).

ATP contacts are provided by residues 9–12, G51, and R55; that span reads KLSG. UMP-binding positions include D69 and 130–137; that span reads TGNPFFST. ATP-binding residues include N158, Y164, and D167.

Belongs to the UMP kinase family. Homohexamer.

Its subcellular location is the cytoplasm. The catalysed reaction is UMP + ATP = UDP + ADP. It participates in pyrimidine metabolism; CTP biosynthesis via de novo pathway; UDP from UMP (UMPK route): step 1/1. With respect to regulation, inhibited by UTP. Catalyzes the reversible phosphorylation of UMP to UDP. This chain is Uridylate kinase, found in Thermus thermophilus (strain ATCC BAA-163 / DSM 7039 / HB27).